The primary structure comprises 34 residues: Photosystem II reaction center protein M (34 aa).

A helical transmembrane segment spans residues 5-25 (ILAFIATALFISIPTAFLLIP).

Belongs to the PsbM family. In terms of assembly, PSII is composed of 1 copy each of membrane proteins PsbA, PsbB, PsbC, PsbD, PsbE, PsbF, PsbH, PsbI, PsbJ, PsbK, PsbL, PsbM, PsbT, PsbX, PsbY, PsbZ, Psb30/Ycf12, at least 3 peripheral proteins of the oxygen-evolving complex and a large number of cofactors. It forms dimeric complexes.

It is found in the plastid. The protein resides in the chloroplast thylakoid membrane. In terms of biological role, one of the components of the core complex of photosystem II (PSII). PSII is a light-driven water:plastoquinone oxidoreductase that uses light energy to abstract electrons from H(2)O, generating O(2) and a proton gradient subsequently used for ATP formation. It consists of a core antenna complex that captures photons, and an electron transfer chain that converts photonic excitation into a charge separation. This subunit is found at the monomer-monomer interface. The polypeptide is Photosystem II reaction center protein M (Psilotum nudum (Whisk fern)).